A 236-amino-acid polypeptide reads, in one-letter code: 2,3,4,5-tetrahydropyridine-2,6-dicarboxylate N-acetyltransferase (236 aa).

Belongs to the transferase hexapeptide repeat family. DapH subfamily.

The catalysed reaction is (S)-2,3,4,5-tetrahydrodipicolinate + acetyl-CoA + H2O = L-2-acetamido-6-oxoheptanedioate + CoA. Its pathway is amino-acid biosynthesis; L-lysine biosynthesis via DAP pathway; LL-2,6-diaminopimelate from (S)-tetrahydrodipicolinate (acetylase route): step 1/3. Functionally, catalyzes the transfer of an acetyl group from acetyl-CoA to tetrahydrodipicolinate. This Clostridium perfringens (strain SM101 / Type A) protein is 2,3,4,5-tetrahydropyridine-2,6-dicarboxylate N-acetyltransferase.